The following is a 641-amino-acid chain: MALDSESSASNRQGSRNEQDTNPRLTAALCLTALGVVYGDIATSPLYAFREALHNIAPDSRTPESILGILSLIFWALIILVSIKYLLIIMRADNHGEGGILALLALLRPWRGSPQHQRNVLIVLGLFGAALLYGDGMITPAISVLSAMEGLEVAAPQLTSYIIPATTVILVLLFMVQKRGTARIGRVFGPIMLVWFVVIALLGLNGIIHHPQVLVAVNPYYGINFFTDNGWSAFRVLGGVFLALTGAEALYADMGHVGRAPIRLMWFALVLPALLLNYFGQGALLLLDPHEAQPFFHLAPPSFLYSLVGLATLATIIASQAIISGVFSLTRQAIQLGQSPRLTLVQTSSEEIGQVYVPAANWFMMIAAVWLVLHFRSSDNLAGAFGIAVSGTMVITTILAFFVMRERWHWNILTAVAVTVGFLIIDLAFFSSNLLKITDGGWFPLAIAVFIFTLMITWQQGRQLLIQRIHKETESFQDFLQRIVTDPPVRVSGTAVFLTIHQHDTPPALLYQLIHNKALHEQVVLVTVITEEVPRVPAAERLEVMELSSGFHRIIVHYGFMQSPNVPVALRACETLGLKIDLDTTTYYLSRASLIPTDERPGMALWRDRLFAFMSRNSAWPTAFYHLPPEHVIELGIQVEL.

A compositionally biased stretch (polar residues) spans methionine 1–glycine 14. Residues methionine 1 to aspartate 20 are disordered. A run of 12 helical transmembrane segments spans residues leucine 29–phenylalanine 49, isoleucine 69–isoleucine 89, valine 120–proline 140, proline 156–valine 176, phenylalanine 188–isoleucine 208, valine 236–histidine 256, phenylalanine 267–leucine 287, leucine 307–phenylalanine 327, valine 355–phenylalanine 375, alanine 384–methionine 404, tryptophan 410–phenylalanine 430, and isoleucine 437–threonine 457.

The protein belongs to the HAK/KUP transporter (TC 2.A.72) family.

Its subcellular location is the cell inner membrane. The enzyme catalyses K(+)(in) + H(+)(in) = K(+)(out) + H(+)(out). Its function is as follows. Transport of potassium into the cell. Likely operates as a K(+):H(+) symporter. In Nitrosomonas eutropha (strain DSM 101675 / C91 / Nm57), this protein is Probable potassium transport system protein Kup.